A 254-amino-acid chain; its full sequence is uncharacterized protein (254 aa).

8 helical membrane-spanning segments follow: residues Val-41 to Ile-61, Ile-64 to Phe-84, Ile-91 to Leu-111, Ile-125 to Ala-145, Pro-146 to Phe-166, Phe-172 to Leu-192, Met-204 to Pro-224, and Ile-232 to Leu-252.

This sequence belongs to the TatC family.

The protein resides in the plastid. It is found in the chloroplast membrane. This is an uncharacterized protein from Porphyra purpurea (Red seaweed).